The sequence spans 654 residues: Protein THALLO (654 aa).

Over residues 1–16 the composition is skewed to basic residues; the sequence is MGKKGGTLKRSSKSTK. 3 disordered regions span residues 1-23, 35-145, and 164-212; these read MGKK…DIVE, KQRD…SDDE, and SITA…KDTH. Positions 2–9 match the Nuclear localization signal 1 motif; that stretch reads GKKGGTLK. Composition is skewed to acidic residues over residues 44 to 56, 64 to 82, and 103 to 114; these read VNDD…EDDV, GVDD…EEAE, and GDDEMADDDKDK. The stretch at 140 to 160 forms a coiled coil; it reads LSSDDEDIKAEEEEVIRLRAE. Positions 171–181 are enriched in acidic residues; the sequence is GLDDDSEEDSD. Basic and acidic residues predominate over residues 182 to 212; sequence RELTMEEISDKGKQATKSITDKKEKGDKDTH. Positions 243–263 form a coiled coil; sequence LSELNDAVEELESKINPVMNK. Disordered stretches follow at residues 362 to 397, 470 to 492, and 509 to 654; these read SDSV…HQND, VSTK…DDIG, and KSSE…SIRM. Residues 364–387 show a composition bias toward basic and acidic residues; it reads SVDRITQDTAKPMKIDNAREEKKK. Residues 524 to 546 are compositionally biased toward acidic residues; sequence SDDEDDNDGDNNDMVDNDGESED. Residues 552-561 show a composition bias toward basic residues; that stretch reads VKQKQQAKRA. Over residues 588-599 the composition is skewed to polar residues; it reads SNQMVSNRGLTR. The Nuclear localization signal 2 motif lies at 608–615; the sequence is PRKKYRKN. Residues 645–654 show a composition bias toward polar residues; that stretch reads NPNTSRSIRM.

This sequence belongs to the SAS10 family. In terms of assembly, interacts with NUCL1, NUCL2, JMJ14, NOF1 and MPP10 in the nucleus. Mainly present in tissues undergoing rapid cellular growth and differentiation. Mostly expressed in shoots and flowers, and, to a lower extent, in leaves, siliques, roots and seedlings.

The protein resides in the nucleus. The protein localises to the nucleolus. Functionally, essential protein during embryogenesis. Involved both in gene transcription regulation and in processing events critical for proper rRNA biogenesis and nucleolar organization during reproduction; contributes to pre-rRNA processing at the 5' external transcribed spacer. Binds RNA. This chain is Protein THALLO, found in Arabidopsis thaliana (Mouse-ear cress).